Consider the following 246-residue polypeptide: Outer membrane protein assembly factor BamD (246 aa).

A signal peptide spans 1-22 (MKKKNSIIFVFMILFFNSTVQS).

It belongs to the BamD family. Part of the Bam complex.

It is found in the cell outer membrane. Its function is as follows. Part of the outer membrane protein assembly complex, which is involved in assembly and insertion of beta-barrel proteins into the outer membrane. The chain is Outer membrane protein assembly factor BamD from Buchnera aphidicola subsp. Acyrthosiphon pisum (strain APS) (Acyrthosiphon pisum symbiotic bacterium).